Here is a 363-residue protein sequence, read N- to C-terminus: 3-isopropylmalate dehydrogenase (363 aa).

Residue 78-91 (GKRWDHLPINERPE) coordinates NAD(+). Substrate is bound by residues R99, R109, R138, and D227. Mg(2+) contacts are provided by D227, D251, and D255. NAD(+) is bound at residue 285-297 (GSAPDIAGKNTAN).

The protein belongs to the isocitrate and isopropylmalate dehydrogenases family. LeuB type 1 subfamily. As to quaternary structure, homodimer. It depends on Mg(2+) as a cofactor. Mn(2+) is required as a cofactor.

It localises to the cytoplasm. The enzyme catalyses (2R,3S)-3-isopropylmalate + NAD(+) = 4-methyl-2-oxopentanoate + CO2 + NADH. It functions in the pathway amino-acid biosynthesis; L-leucine biosynthesis; L-leucine from 3-methyl-2-oxobutanoate: step 3/4. In terms of biological role, catalyzes the oxidation of 3-carboxy-2-hydroxy-4-methylpentanoate (3-isopropylmalate) to 3-carboxy-4-methyl-2-oxopentanoate. The product decarboxylates to 4-methyl-2 oxopentanoate. In Buchnera aphidicola subsp. Uroleucon helianthicola, this protein is 3-isopropylmalate dehydrogenase.